The chain runs to 378 residues: Histidine decarboxylase (378 aa).

A substrate-binding site is contributed by His-120. The residue at position 233 (Lys-233) is an N6-(pyridoxal phosphate)lysine.

The protein belongs to the group II decarboxylase family. In terms of assembly, homotetramer. Pyridoxal 5'-phosphate is required as a cofactor.

It carries out the reaction L-histidine + H(+) = histamine + CO2. This chain is Histidine decarboxylase (hdc), found in Klebsiella aerogenes (Enterobacter aerogenes).